The chain runs to 269 residues: 5'-nucleotidase SurE (269 aa).

The a divalent metal cation site is built by aspartate 11, aspartate 12, serine 43, and asparagine 101.

Belongs to the SurE nucleotidase family. A divalent metal cation serves as cofactor.

It localises to the cytoplasm. It catalyses the reaction a ribonucleoside 5'-phosphate + H2O = a ribonucleoside + phosphate. Its function is as follows. Nucleotidase that shows phosphatase activity on nucleoside 5'-monophosphates. This is 5'-nucleotidase SurE from Prochlorococcus marinus (strain MIT 9303).